The following is a 259-amino-acid chain: Protein YIF1B (259 aa).

Methionine 1 is subject to N-acetylmethionine. Residues 1-61 (MHATGLAAPA…QPSPGSLGYP (61 aa)) form a disordered region. The Cytoplasmic portion of the chain corresponds to 9–153 (PAGTPRLRKW…APRFDINAPD (145 aa)). Threonine 12 carries the post-translational modification Phosphothreonine. Residues 14–24 (RLRKWPSKRRV) are compositionally biased toward basic residues. Serine 64 carries the post-translational modification Phosphoserine. A helical membrane pass occupies residues 154-174 (LYIPAMAFITYILVAGLALGT). Residues 175–186 (QDRMIGGVLTGL) are Extracellular-facing. The chain crosses the membrane as a helical span at residues 187–207 (LFGKIGYYLVLAWCCVSIFVF). The Cytoplasmic portion of the chain corresponds to 208 to 237 (MIRTLRLKILAQAAAEGVPVRGARNQLRMY). The helical transmembrane segment at 238–258 (LTMAVAAAQPVLMYWLTFHLV) threads the bilayer. Position 259 (arginine 259) is a topological domain, extracellular.

Belongs to the YIF1 family. As to quaternary structure, interacts with HTR1A (via C-terminus). Interacts with ABCB9 (via TMD0); this interaction allows (but is not essential) the ER-to-Golgi trafficking and strongly depends on a salt bridge within TMD0. In terms of tissue distribution, highly expressed in brain. Expressed in heart, kidney, and lung and lower levels in spleen, muscle, and intestine (at protein level). Expressed in serotoninergic neurons (at protein level).

It is found in the endoplasmic reticulum membrane. The protein localises to the golgi apparatus membrane. Its subcellular location is the endoplasmic reticulum-Golgi intermediate compartment membrane. Its function is as follows. Functions in endoplasmic reticulum to Golgi vesicle-mediated transport and regulates the proper organization of the endoplasmic reticulum and the Golgi. Plays a key role in targeting to neuronal dendrites receptors such as HTR1A. Plays also a role in primary cilium and sperm flagellum assembly probably through protein transport to these compartments. This chain is Protein YIF1B, found in Rattus norvegicus (Rat).